A 147-amino-acid chain; its full sequence is Sec-independent protein translocase protein TatB (147 aa).

A helical membrane pass occupies residues 1–21 (MFDIGFWELVVIGVVALVVLG). Positions 114-147 (EPVAPISVATPDEEPTVIPAARAQPSAEQGEVKP) are disordered.

Belongs to the TatB family. In terms of assembly, the Tat system comprises two distinct complexes: a TatABC complex, containing multiple copies of TatA, TatB and TatC subunits, and a separate TatA complex, containing only TatA subunits. Substrates initially bind to the TatABC complex, which probably triggers association of the separate TatA complex to form the active translocon.

Its subcellular location is the cell inner membrane. Its function is as follows. Part of the twin-arginine translocation (Tat) system that transports large folded proteins containing a characteristic twin-arginine motif in their signal peptide across membranes. Together with TatC, TatB is part of a receptor directly interacting with Tat signal peptides. TatB may form an oligomeric binding site that transiently accommodates folded Tat precursor proteins before their translocation. The polypeptide is Sec-independent protein translocase protein TatB (Aeromonas hydrophila subsp. hydrophila (strain ATCC 7966 / DSM 30187 / BCRC 13018 / CCUG 14551 / JCM 1027 / KCTC 2358 / NCIMB 9240 / NCTC 8049)).